Consider the following 316-residue polypeptide: tRNA dimethylallyltransferase (316 aa).

17–24 provides a ligand contact to ATP; the sequence is GPTASGKT. 19 to 24 contributes to the substrate binding site; sequence TASGKT. Interaction with substrate tRNA stretches follow at residues 42–45, 166–170, 247–252, and 280–287; these read DSVL, QRLSR, RCVGYR, and KRQITWLR.

The protein belongs to the IPP transferase family. In terms of assembly, monomer. The cofactor is Mg(2+).

The enzyme catalyses adenosine(37) in tRNA + dimethylallyl diphosphate = N(6)-dimethylallyladenosine(37) in tRNA + diphosphate. Functionally, catalyzes the transfer of a dimethylallyl group onto the adenine at position 37 in tRNAs that read codons beginning with uridine, leading to the formation of N6-(dimethylallyl)adenosine (i(6)A). This chain is tRNA dimethylallyltransferase, found in Shigella flexneri.